Reading from the N-terminus, the 944-residue chain is Valine--tRNA ligase (944 aa).

The short motif at 43–53 (PNVTGTLHMGH) is the 'HIGH' region element. Residues 550–554 (KMSKS) carry the 'KMSKS' region motif. K553 lines the ATP pocket. A coiled-coil region spans residues 878-944 (LVDMDAERTR…TGLREQRAKL (67 aa)).

Belongs to the class-I aminoacyl-tRNA synthetase family. ValS type 1 subfamily. As to quaternary structure, monomer.

Its subcellular location is the cytoplasm. It carries out the reaction tRNA(Val) + L-valine + ATP = L-valyl-tRNA(Val) + AMP + diphosphate. Functionally, catalyzes the attachment of valine to tRNA(Val). As ValRS can inadvertently accommodate and process structurally similar amino acids such as threonine, to avoid such errors, it has a 'posttransfer' editing activity that hydrolyzes mischarged Thr-tRNA(Val) in a tRNA-dependent manner. The protein is Valine--tRNA ligase of Xanthomonas campestris pv. campestris (strain B100).